Here is a 355-residue protein sequence, read N- to C-terminus: Holliday junction branch migration complex subunit RuvB (355 aa).

Residues 4 to 190 (TDKLAAERII…FGIVARLEFY (187 aa)) form a large ATPase domain (RuvB-L) region. ATP is bound by residues leucine 29, arginine 30, glycine 71, lysine 74, threonine 75, threonine 76, 137–139 (EDY), arginine 180, tyrosine 190, and arginine 227. Position 75 (threonine 75) interacts with Mg(2+). The tract at residues 191 to 261 (DADQLARIVR…VADAALAMLD (71 aa)) is small ATPAse domain (RuvB-S). A head domain (RuvB-H) region spans residues 264-355 (PVGFDLMDRK…RGMWDTPAGK (92 aa)). The DNA site is built by arginine 300, arginine 319, and arginine 324.

Belongs to the RuvB family. In terms of assembly, homohexamer. Forms an RuvA(8)-RuvB(12)-Holliday junction (HJ) complex. HJ DNA is sandwiched between 2 RuvA tetramers; dsDNA enters through RuvA and exits via RuvB. An RuvB hexamer assembles on each DNA strand where it exits the tetramer. Each RuvB hexamer is contacted by two RuvA subunits (via domain III) on 2 adjacent RuvB subunits; this complex drives branch migration. In the full resolvosome a probable DNA-RuvA(4)-RuvB(12)-RuvC(2) complex forms which resolves the HJ.

It is found in the cytoplasm. The enzyme catalyses ATP + H2O = ADP + phosphate + H(+). Its function is as follows. The RuvA-RuvB-RuvC complex processes Holliday junction (HJ) DNA during genetic recombination and DNA repair, while the RuvA-RuvB complex plays an important role in the rescue of blocked DNA replication forks via replication fork reversal (RFR). RuvA specifically binds to HJ cruciform DNA, conferring on it an open structure. The RuvB hexamer acts as an ATP-dependent pump, pulling dsDNA into and through the RuvAB complex. RuvB forms 2 homohexamers on either side of HJ DNA bound by 1 or 2 RuvA tetramers; 4 subunits per hexamer contact DNA at a time. Coordinated motions by a converter formed by DNA-disengaged RuvB subunits stimulates ATP hydrolysis and nucleotide exchange. Immobilization of the converter enables RuvB to convert the ATP-contained energy into a lever motion, pulling 2 nucleotides of DNA out of the RuvA tetramer per ATP hydrolyzed, thus driving DNA branch migration. The RuvB motors rotate together with the DNA substrate, which together with the progressing nucleotide cycle form the mechanistic basis for DNA recombination by continuous HJ branch migration. Branch migration allows RuvC to scan DNA until it finds its consensus sequence, where it cleaves and resolves cruciform DNA. The protein is Holliday junction branch migration complex subunit RuvB of Burkholderia ambifaria (strain ATCC BAA-244 / DSM 16087 / CCUG 44356 / LMG 19182 / AMMD) (Burkholderia cepacia (strain AMMD)).